A 447-amino-acid polypeptide reads, in one-letter code: Sulfoquinovose isomerase (447 aa).

This sequence belongs to the SqvD family.

The enzyme catalyses 6-sulfo-beta-D-quinovose = 6-deoxy-6-sulfo-D-fructose. Functionally, part of the sulfo-TK pathway, a D-sulfoquinovose degradation pathway that produces 2-hydroxyethane-1-sulfonate (isethionate). Catalyzes the isomerization of sulfoquinovose (SQ) to 6-deoxy-6-sulfo-D-fructose (SF). The sequence is that of Sulfoquinovose isomerase from Clostridium sp. (strain MSTE9).